Here is a 365-residue protein sequence, read N- to C-terminus: MSSSFGKIFRVSTFGESHGGGVGVILDGCPPKLKIDIKLIQNELDRRRPGQSDITTPRNEDDKIEILSGIKEGLTLGTPIAMLVRNKDQRPGDYNNLEQVFRPSHADGTYHLKYGIQAGSGGGRASARETIGRVAAGAVAKQLLKNLCNTEILSWVKRIHDIDSDVNKEKISLNKIDSNIVRCPDEKVSAEMIDRIKDLKRQGDSCGGVIECLVRNVPSGLGMPVFDKLEADLAKALMSLPATKGFEIGSGFSGTYLKGSEHNDSFIKSDDISKLRTTSNNSGGIQGGISNGENIEMKIAFKPTATIGKEQKTVNAEGKEVLMKAKGRHDPCVLPRAVPMVDAMVALVLADHLLLNNAQCGLMKN.

R47 contacts NADP(+). FMN contacts are provided by residues 124 to 126 (RAS), G287, 302 to 306 (KPTAT), and R328.

The protein belongs to the chorismate synthase family. As to quaternary structure, homotetramer. FMNH2 serves as cofactor.

It catalyses the reaction 5-O-(1-carboxyvinyl)-3-phosphoshikimate = chorismate + phosphate. Its pathway is metabolic intermediate biosynthesis; chorismate biosynthesis; chorismate from D-erythrose 4-phosphate and phosphoenolpyruvate: step 7/7. Catalyzes the anti-1,4-elimination of the C-3 phosphate and the C-6 proR hydrogen from 5-enolpyruvylshikimate-3-phosphate (EPSP) to yield chorismate, which is the branch point compound that serves as the starting substrate for the three terminal pathways of aromatic amino acid biosynthesis. This reaction introduces a second double bond into the aromatic ring system. The protein is Chorismate synthase of Prochlorococcus marinus (strain MIT 9312).